The sequence spans 277 residues: Collectin-10 (277 aa).

The N-terminal stretch at 1–27 (MNGFASLLRRNQFILLVLFLLQIQSLG) is a signal peptide. The disordered stretch occupies residues 40 to 107 (ATHTISPGPK…GDKGEKGLLG (68 aa)). Residues 49 to 64 (KGDDGEKGDPGEEGKH) show a composition bias toward basic and acidic residues. The Collagen-like domain maps to 53–112 (GEKGDPGEEGKHGKVGRMGPKGIKGELGDMGDQGNIGKTGPIGKKGDKGEKGLLGIPGEK). Residues 155-271 (TEEKFYYIVQ…CHLTMYFVCE (117 aa)) enclose the C-type lectin domain. 2 disulfides stabilise this stretch: C176–C270 and C248–C262. N258 carries an N-linked (GlcNAc...) asparagine glycan.

This sequence belongs to the COLEC10/COLEC11 family. As to expression, highly expressed in liver, placenta and adrenal gland. Moderately expressed in small intestine, lung, stomach and prostate. Weakly expressed in trachea and spleen.

It is found in the secreted. Its subcellular location is the golgi apparatus. It localises to the cytoplasm. Functionally, lectin that binds to various sugars: galactose &gt; mannose = fucose &gt; N-acetylglucosamine &gt; N-acetylgalactosamine. Acts as a chemoattractant, probably involved in the regulation of cell migration. In Homo sapiens (Human), this protein is Collectin-10 (COLEC10).